Here is a 305-residue protein sequence, read N- to C-terminus: GTP cyclohydrolase FolE2 (305 aa).

This sequence belongs to the GTP cyclohydrolase IV family.

It carries out the reaction GTP + H2O = 7,8-dihydroneopterin 3'-triphosphate + formate + H(+). Its pathway is cofactor biosynthesis; 7,8-dihydroneopterin triphosphate biosynthesis; 7,8-dihydroneopterin triphosphate from GTP: step 1/1. In terms of biological role, converts GTP to 7,8-dihydroneopterin triphosphate. The protein is GTP cyclohydrolase FolE2 of Xanthomonas euvesicatoria pv. vesicatoria (strain 85-10) (Xanthomonas campestris pv. vesicatoria).